We begin with the raw amino-acid sequence, 201 residues long: Small ribosomal subunit protein uS4 (201 aa).

The 61-residue stretch at 93-153 (ARLDNVVYRM…EKSKSLEAID (61 aa)) folds into the S4 RNA-binding domain.

This sequence belongs to the universal ribosomal protein uS4 family. As to quaternary structure, part of the 30S ribosomal subunit. Contacts protein S5. The interaction surface between S4 and S5 is involved in control of translational fidelity.

One of the primary rRNA binding proteins, it binds directly to 16S rRNA where it nucleates assembly of the body of the 30S subunit. In terms of biological role, with S5 and S12 plays an important role in translational accuracy. This chain is Small ribosomal subunit protein uS4, found in Flavobacterium psychrophilum (strain ATCC 49511 / DSM 21280 / CIP 103535 / JIP02/86).